Consider the following 371-residue polypeptide: Ferrochelatase (371 aa).

The Fe cation site is built by histidine 218 and glutamate 299.

It belongs to the ferrochelatase family.

The protein resides in the cytoplasm. The enzyme catalyses heme b + 2 H(+) = protoporphyrin IX + Fe(2+). It functions in the pathway porphyrin-containing compound metabolism; protoheme biosynthesis; protoheme from protoporphyrin-IX: step 1/1. Its function is as follows. Catalyzes the ferrous insertion into protoporphyrin IX. The polypeptide is Ferrochelatase (Cupriavidus taiwanensis (strain DSM 17343 / BCRC 17206 / CCUG 44338 / CIP 107171 / LMG 19424 / R1) (Ralstonia taiwanensis (strain LMG 19424))).